Reading from the N-terminus, the 468-residue chain is Mitochondrial distribution and morphology protein 10 (468 aa).

Belongs to the MDM10 family. In terms of assembly, component of the ER-mitochondria encounter structure (ERMES) or MDM complex, composed of MMM1, MDM10, MDM12 and MDM34. Associates with the mitochondrial outer membrane sorting assembly machinery SAM(core) complex.

Its subcellular location is the mitochondrion outer membrane. Its function is as follows. Component of the ERMES/MDM complex, which serves as a molecular tether to connect the endoplasmic reticulum and mitochondria. Components of this complex are involved in the control of mitochondrial shape and protein biogenesis and may function in phospholipid exchange. MDM10 is involved in the late assembly steps of the general translocase of the mitochondrial outer membrane (TOM complex). Functions in the TOM40-specific route of the assembly of outer membrane beta-barrel proteins, including the association of TOM40 with the receptor TOM22 and small TOM proteins. Can associate with the SAM(core) complex as well as the MDM12-MMM1 complex, both involved in late steps of the major beta-barrel assembly pathway, that is responsible for biogenesis of all outer membrane beta-barrel proteins. May act as a switch that shuttles between both complexes and channels precursor proteins into the TOM40-specific pathway. Plays a role in mitochondrial morphology and in the inheritance of mitochondria. The protein is Mitochondrial distribution and morphology protein 10 of Blastomyces gilchristii (strain SLH14081) (Blastomyces dermatitidis).